The following is a 359-amino-acid chain: tRNA/tmRNA (uracil-C(5))-methyltransferase (359 aa).

Glutamine 183, tyrosine 211, asparagine 216, glutamate 232, and aspartate 292 together coordinate S-adenosyl-L-methionine. Catalysis depends on cysteine 317, which acts as the Nucleophile. The Proton acceptor role is filled by glutamate 351.

This sequence belongs to the class I-like SAM-binding methyltransferase superfamily. RNA M5U methyltransferase family. TrmA subfamily.

It carries out the reaction uridine(54) in tRNA + S-adenosyl-L-methionine = 5-methyluridine(54) in tRNA + S-adenosyl-L-homocysteine + H(+). The catalysed reaction is uridine(341) in tmRNA + S-adenosyl-L-methionine = 5-methyluridine(341) in tmRNA + S-adenosyl-L-homocysteine + H(+). Its function is as follows. Dual-specificity methyltransferase that catalyzes the formation of 5-methyluridine at position 54 (m5U54) in all tRNAs, and that of position 341 (m5U341) in tmRNA (transfer-mRNA). In Pseudomonas fluorescens (strain SBW25), this protein is tRNA/tmRNA (uracil-C(5))-methyltransferase.